We begin with the raw amino-acid sequence, 638 residues long: uncharacterized protein (638 aa).

This is an uncharacterized protein from Homo sapiens (Human).